Consider the following 309-residue polypeptide: Tagatose-6-phosphate kinase (309 aa).

This sequence belongs to the carbohydrate kinase PfkB family. LacC subfamily.

It carries out the reaction D-tagatofuranose 6-phosphate + ATP = D-tagatofuranose 1,6-bisphosphate + ADP + H(+). The protein operates within carbohydrate metabolism; D-tagatose 6-phosphate degradation; D-glyceraldehyde 3-phosphate and glycerone phosphate from D-tagatose 6-phosphate: step 1/2. The polypeptide is Tagatose-6-phosphate kinase (Streptococcus pyogenes serotype M6 (strain ATCC BAA-946 / MGAS10394)).